We begin with the raw amino-acid sequence, 602 residues long: Threonine--tRNA ligase (602 aa).

The segment at 208-499 (DHRKLGTELK…LTEHCAGEFP (292 aa)) is catalytic. Zn(2+) contacts are provided by C300, H351, and H476.

This sequence belongs to the class-II aminoacyl-tRNA synthetase family. Homodimer. It depends on Zn(2+) as a cofactor.

The protein resides in the cytoplasm. The catalysed reaction is tRNA(Thr) + L-threonine + ATP = L-threonyl-tRNA(Thr) + AMP + diphosphate + H(+). Catalyzes the attachment of threonine to tRNA(Thr) in a two-step reaction: L-threonine is first activated by ATP to form Thr-AMP and then transferred to the acceptor end of tRNA(Thr). Also edits incorrectly charged L-seryl-tRNA(Thr). This chain is Threonine--tRNA ligase, found in Campylobacter jejuni subsp. jejuni serotype O:23/36 (strain 81-176).